The chain runs to 265 residues: Phosphonoacetaldehyde hydrolase (265 aa).

Asp-9 functions as the Nucleophile in the catalytic mechanism. Mg(2+) is bound by residues Asp-9 and Ala-11. Residue Lys-50 is the Schiff-base intermediate with substrate of the active site. Position 184 (Asp-184) interacts with Mg(2+).

It belongs to the HAD-like hydrolase superfamily. PhnX family. As to quaternary structure, homodimer. The cofactor is Mg(2+).

It carries out the reaction phosphonoacetaldehyde + H2O = acetaldehyde + phosphate + H(+). Its function is as follows. Involved in phosphonate degradation. In Lactiplantibacillus plantarum (strain ATCC BAA-793 / NCIMB 8826 / WCFS1) (Lactobacillus plantarum), this protein is Phosphonoacetaldehyde hydrolase.